The sequence spans 329 residues: GTPase Obg (329 aa).

The 159-residue stretch at 1-159 (MQFIDQARIT…WFLQLELKLL (159 aa)) folds into the Obg domain. Positions 160–328 (AEVGIIGLPN…LLAQVWKELG (169 aa)) constitute an OBG-type G domain. ATP is bound by residues 166–173 (GLPNAGKS), 191–195 (FTTLV), 213–216 (DIPG), 280–283 (NKQE), and 309–311 (SAA). Serine 173 and threonine 193 together coordinate Mg(2+).

The protein belongs to the TRAFAC class OBG-HflX-like GTPase superfamily. OBG GTPase family. In terms of assembly, monomer. Mg(2+) is required as a cofactor.

The protein localises to the cytoplasm. Functionally, an essential GTPase which binds GTP, GDP and possibly (p)ppGpp with moderate affinity, with high nucleotide exchange rates and a fairly low GTP hydrolysis rate. Plays a role in control of the cell cycle, stress response, ribosome biogenesis and in those bacteria that undergo differentiation, in morphogenesis control. This chain is GTPase Obg, found in Prochlorococcus marinus (strain MIT 9313).